The primary structure comprises 532 residues: Telomerase Cajal body protein 1 (532 aa).

Residues 1–48 (MKTSEELRLAPDSLPSDLVPAPVLQASPADKNTDSEPVPPPCGGDDQL) are disordered. 3 positions are modified to phosphoserine: S27, S61, and S83. Residues 83–115 (SPRIEEQEVPENASLPVEETNRPELESGEAMEG) form a disordered region. 6 WD repeats span residues 151 to 190 (RSEN…YSES), 206 to 251 (EGDT…LRAS), 256 to 297 (NHLD…RDCE), 307 to 348 (GQSG…ALLG), 349 to 389 (GHQG…HLLW), and 395 to 434 (VTTN…SDCK). Phosphothreonine is present on T474. S476 bears the Phosphoserine mark. A disordered region spans residues 505-532 (CGGGPDPSNPDEDQDEKGQGRTEAVGMS).

It belongs to the TCAB1 family. Component of the telomerase holoenzyme complex composed of one molecule of TERT, one molecule of WRAP53/TCAB1, two molecules of H/ACA ribonucleoprotein complex subunits DKC1, NOP10, NHP2 and GAR1, and a telomerase RNA template component (TERC). The telomerase holoenzyme complex is associated with TEP1, SMG6/EST1A and POT1. Interacts with the chaperonin-containing T-complex (TRiC) complex; which mediates the folding of WRAP53/TCAB1. Interacts with COIL. Interacts with SMN1. Interacts with RNF8. Interacts with histone H2AX. Post-translationally, phosphorylated at Ser-61 by ATM in response to DNA damage, promoting its interaction with histone H2AX and localization to sites of DNA double-strand breaks.

Its subcellular location is the nucleus. The protein resides in the cajal body. The protein localises to the chromosome. It is found in the telomere. Its function is as follows. RNA chaperone that plays a key role in telomere maintenance and RNA localization to Cajal bodies. Specifically recognizes and binds the Cajal body box (CAB box) present in both small Cajal body RNAs (scaRNAs) and telomerase RNA template component (TERC). Essential component of the telomerase holoenzyme complex, a ribonucleoprotein complex essential for the replication of chromosome termini that elongates telomeres in most eukaryotes. In the telomerase holoenzyme complex, required to stimulate the catalytic activity of the complex. Acts by specifically binding the CAB box of the TERC RNA and controlling the folding of the CR4/CR5 region of the TERC RNA, a critical step for telomerase activity. In addition, also controls telomerase holoenzyme complex localization to Cajal body. During S phase, required for delivery of TERC to telomeres during S phase and for telomerase activity. In addition to its role in telomere maintenance, also required for Cajal body formation, probably by mediating localization of scaRNAs to Cajal bodies. Also plays a role in DNA repair: phosphorylated by ATM in response to DNA damage and relocalizes to sites of DNA double-strand breaks to promote the repair of DNA double-strand breaks. Acts by recruiting the ubiquitin ligase RNF8 to DNA breaks and promote both homologous recombination (HR) and non-homologous end joining (NHEJ). This chain is Telomerase Cajal body protein 1, found in Rattus norvegicus (Rat).